We begin with the raw amino-acid sequence, 63 residues long: Large ribosomal subunit protein uL29 (63 aa).

The protein belongs to the universal ribosomal protein uL29 family.

The sequence is that of Large ribosomal subunit protein uL29 from Shewanella denitrificans (strain OS217 / ATCC BAA-1090 / DSM 15013).